A 199-amino-acid chain; its full sequence is 3-isopropylmalate dehydratase small subunit (199 aa).

This sequence belongs to the LeuD family. LeuD type 1 subfamily. Heterodimer of LeuC and LeuD.

It carries out the reaction (2R,3S)-3-isopropylmalate = (2S)-2-isopropylmalate. It participates in amino-acid biosynthesis; L-leucine biosynthesis; L-leucine from 3-methyl-2-oxobutanoate: step 2/4. Functionally, catalyzes the isomerization between 2-isopropylmalate and 3-isopropylmalate, via the formation of 2-isopropylmaleate. This chain is 3-isopropylmalate dehydratase small subunit, found in Pseudoalteromonas translucida (strain TAC 125).